We begin with the raw amino-acid sequence, 334 residues long: MTPTVLLLILCFGVASGAQAHDPKLDAEWKDWKTKYAKSYSPKEEALRRAVWEENMRMIKLHNKENSLGKNNFTMKMNKFGDQTSEEFRKSIDNIPIPAAMTDPHAQNHVSIGLPDYKDWREEGYVTPVRNQGKCGSCWAFAAAGAIEGQMFWKTGNLTPLSVQNLLDCSKTVGNKGCQSGTAHQAFEYVLKNKGLEAEATYPYEGKDGPCRYRSENASANITDYVNLPPNELYLWVAVASIGPVSAAIDASHDSFRFYNGGIYYEPNCSSYFVNHAVLVVGYGSEGDVKDGNNYWLIKNSWGEEWGMNGYMQIAKDHNNHCGIASLASYPNIF.

An N-terminal signal peptide occupies residues 1 to 17; sequence MTPTVLLLILCFGVASG. A propeptide spans 18–113 (activation peptide); the sequence is AQAHDPKLDA…PHAQNHVSIG (96 aa). A glycan (N-linked (GlcNAc...) asparagine) is linked at Asn72. 2 cysteine pairs are disulfide-bonded: Cys135–Cys178 and Cys169–Cys211. Cys138 is a catalytic residue. N-linked (GlcNAc...) asparagine glycans are attached at residues Asn217, Asn221, and Asn268. Cys269 and Cys322 are joined by a disulfide. Active-site residues include His276 and Asn300.

This sequence belongs to the peptidase C1 family. As to expression, expressed specifically in placenta.

It localises to the lysosome. This Mus musculus (Mouse) protein is Cathepsin J (Ctsj).